Here is a 427-residue protein sequence, read N- to C-terminus: Protein TIFY 6a (427 aa).

The span at 1–25 (MERDFLGAIGRKEEAAGKPEEHSDY) shows a compositional bias: basic and acidic residues. A disordered region spans residues 1-33 (MERDFLGAIGRKEEAAGKPEEHSDYRGGGGGAS). In terms of domain architecture, Tify spans 196 to 231 (QNPKVTQMTIFYDGLVNVFDNIPVEKAQELMLLASR). Composition is skewed to polar residues over residues 293-303 (LPKSSSSSNDS) and 317-327 (PLSQASPSQPI). Residues 293 to 327 (LPKSSSSSNDSAGPKSGGLPLAVTPLSQASPSQPI) form a disordered region. Positions 343–367 (PQARKASLARFLEKRKERVSSVAPY) match the Jas motif. The short motif at 345–352 (ARKASLAR) is the Nuclear localization signal element. Residues 360–427 (RVSSVAPYPS…QEPPSTKLQI (68 aa)) form a disordered region. 2 stretches are compositionally biased toward polar residues: residues 369-402 (SSKS…NNCE) and 411-427 (RNIS…KLQI).

Belongs to the TIFY/JAZ family. Ubiquitinated.

Its subcellular location is the nucleus. Its function is as follows. Repressor of jasmonate responses. The polypeptide is Protein TIFY 6a (Oryza sativa subsp. indica (Rice)).